The primary structure comprises 257 residues: Deoxyribose-phosphate aldolase (257 aa).

Aspartate 102 acts as the Proton donor/acceptor in catalysis. The Schiff-base intermediate with acetaldehyde role is filled by lysine 166. Lysine 198 acts as the Proton donor/acceptor in catalysis.

This sequence belongs to the DeoC/FbaB aldolase family. DeoC type 2 subfamily.

The protein localises to the cytoplasm. It carries out the reaction 2-deoxy-D-ribose 5-phosphate = D-glyceraldehyde 3-phosphate + acetaldehyde. The protein operates within carbohydrate degradation; 2-deoxy-D-ribose 1-phosphate degradation; D-glyceraldehyde 3-phosphate and acetaldehyde from 2-deoxy-alpha-D-ribose 1-phosphate: step 2/2. Its function is as follows. Catalyzes a reversible aldol reaction between acetaldehyde and D-glyceraldehyde 3-phosphate to generate 2-deoxy-D-ribose 5-phosphate. The polypeptide is Deoxyribose-phosphate aldolase (Shewanella frigidimarina (strain NCIMB 400)).